We begin with the raw amino-acid sequence, 418 residues long: Arrestin domain-containing protein 4 (418 aa).

2 consecutive short sequence motifs (PPxY motif) follow at residues 350–353 and 395–398; these read PPNY and PPLY.

This sequence belongs to the arrestin family. In terms of assembly, interacts with ADRB2. Interacts (via PPxY motifs) with ITCH, NEDD4L and WWP2. Interacts with AVPR2. Identified in a complex containing at least ARRDC4, AVPR2 and HGS. Interacts with SLC11A2; controls the incorporation of SLC11A2 into extracellular vesicles through an ubiquitination-dependent mechanism. Interacts with TRIM65.

The protein resides in the early endosome. It is found in the cell membrane. Its subcellular location is the cytoplasmic vesicle. Functions as an adapter recruiting ubiquitin-protein ligases to their specific substrates. Plays a role in endocytosis of activated G protein-coupled receptors (GPCRs). Through an ubiquitination-dependent mechanism also plays a role in the incorporation of SLC11A2 into extracellular vesicles. May play a role in glucose uptake. Participates in innate immune response by promoting IFIH1/MDA5 activation through interaction with TRIM65. The sequence is that of Arrestin domain-containing protein 4 (ARRDC4) from Homo sapiens (Human).